A 544-amino-acid chain; its full sequence is Chaperonin GroEL (544 aa).

ATP is bound by residues 30–33 (TLGP), Lys-51, 87–91 (DGTTT), Gly-415, and Asp-496.

This sequence belongs to the chaperonin (HSP60) family. Forms a cylinder of 14 subunits composed of two heptameric rings stacked back-to-back. Interacts with the co-chaperonin GroES.

It is found in the cytoplasm. The enzyme catalyses ATP + H2O + a folded polypeptide = ADP + phosphate + an unfolded polypeptide.. Functionally, together with its co-chaperonin GroES, plays an essential role in assisting protein folding. The GroEL-GroES system forms a nano-cage that allows encapsulation of the non-native substrate proteins and provides a physical environment optimized to promote and accelerate protein folding. The protein is Chaperonin GroEL of Granulibacter bethesdensis (strain ATCC BAA-1260 / CGDNIH1).